The primary structure comprises 386 residues: N-acetylneuraminate epimerase (386 aa).

An N-terminal signal peptide occupies residues Met1–Ala29. 7 Kelch repeats span residues Val51 to Asn95, Glu97 to Asn149, Thr151 to Tyr186, Asn187 to Asn232, Leu235 to Ala284, Gln306 to Asp355, and Val357 to Lys386. Glu241 serves as the catalytic Proton acceptor.

This sequence belongs to the NanM family. In terms of assembly, homodimer.

Its subcellular location is the periplasm. The catalysed reaction is N-acetyl-alpha-neuraminate = N-acetyl-beta-neuraminate. Converts alpha-N-acetylneuranimic acid (Neu5Ac) to the beta-anomer, accelerating the equilibrium between the alpha- and beta-anomers. Probably facilitates sialidase-negative bacteria to compete successfully for limited amounts of extracellular Neu5Ac, which is likely taken up in the beta-anomer. In addition, the rapid removal of sialic acid from solution might be advantageous to the bacterium to damp down host responses. This chain is N-acetylneuraminate epimerase, found in Salmonella typhimurium (strain LT2 / SGSC1412 / ATCC 700720).